A 429-amino-acid polypeptide reads, in one-letter code: Prenyltransferase okaC (429 aa).

Positions 101, 189, 191, 257, 259, 342, 406, and 410 each coordinate dimethylallyl diphosphate.

Belongs to the tryptophan dimethylallyltransferase family.

The enzyme catalyses cyclo(L-Trp-L-Trp) + 2 dimethylallyl diphosphate = cyclo(N(8)-(alpha,alpha-dimethylallyl)-L-Trp-6a-(alpha,alpha-dimethylallyl)-L-Trp) + 2 diphosphate. Its pathway is alkaloid biosynthesis. Its function is as follows. Prenyltransferase; part of the gene cluster that mediates the biosynthesis of okaramine B, a prenylated indole alkaloid that possesses an unusual octacyclic ring system, including a four-membered azetidine ring and an eight-membered azocine ring, and that exhibits insecticidal activity against silkworm larvae. Within the pathway, okaC performs asymmetric reverse prenylation of cyclo(L-Trp-L-Trp) at N-1 and C-2' of the indole ring to produce the cyclic prenylated tryptophan dimer cyclo(N8-(alpha,alpha-dimethylallyl)-L-Trp-6a-(alpha,alpha-dime-thylallyl)-L-Trp). The biosynthesis begins with the NRPS okaA that condenses two tryptophan molecules into cyclo(L-Trp-L-Trp). Prenylation by the prenyltransferase okaC then leads to the formation of cyclo(N8-(alpha,alpha-dimethylallyl)-L-Trp-6a-(alpha,alpha-dime-thylallyl)-L-Trp). This is followed by indole 2,3-epoxidation by the FAD-dependent monooxygenase okaB to facilitate the formation of the hexahydropyrrolo[2,3-b]indole (HPI) moiety of okaramine C. The cytochrome P450 monooxygenase okaD then likely catalyzes formation of the eight-membered ring of okaramine A. The dioxygenase okaE further forms the unusual 2-dimethyl-3-methyl-azetidine ring to yield 12-deshydroxyl okaramine E, as well as the hydroxylation of 12-deshydroxyl okaramine E to produce okaramine E. The cytochrome P450 monoxygenase okaG converts 12-deshydroxyl okaramine E into 3-desmethyl okaramine B which is further methylated by the methyltransferase okaF into okaramine B. In a shunt pathway, okaG and okaF together are also able to convert okaramine E into okaramine D. Okaramine H is produced by nonenzymatic conversion from okaramine A. In Penicillium ochrochloron, this protein is Prenyltransferase okaC.